A 207-amino-acid polypeptide reads, in one-letter code: ATP synthase subunit 5, mitochondrial (207 aa).

Belongs to the ATPase delta chain family. As to quaternary structure, F-type ATPases have 2 components, CF(1) - the catalytic core - and CF(0) - the membrane proton channel. CF(1) has five subunits: alpha(3), beta(3), gamma(1), delta(1), epsilon(1). CF(0) has three main subunits: a, b and c.

The protein resides in the mitochondrion. The protein localises to the mitochondrion inner membrane. Its function is as follows. Mitochondrial membrane ATP synthase (F(1)F(0) ATP synthase or Complex V) produces ATP from ADP in the presence of a proton gradient across the membrane which is generated by electron transport complexes of the respiratory chain. F-type ATPases consist of two structural domains, F(1) - containing the extramembraneous catalytic core and F(0) - containing the membrane proton channel, linked together by a central stalk and a peripheral stalk. During catalysis, ATP synthesis in the catalytic domain of F(1) is coupled via a rotary mechanism of the central stalk subunits to proton translocation. Part of the complex F(0) domain and the peripheric stalk, which acts as a stator to hold the catalytic alpha(3)beta(3) subcomplex and subunit a/ATP6 static relative to the rotary elements. The protein is ATP synthase subunit 5, mitochondrial (ATP5) of Candida glabrata (strain ATCC 2001 / BCRC 20586 / JCM 3761 / NBRC 0622 / NRRL Y-65 / CBS 138) (Yeast).